The following is a 188-amino-acid chain: MATYYSNDFRSGLKIMLDGEPYAVESSEFVKPGKGQAFARVKLRRLLTGTRVEKTFKSTDSAEGADVVDMNLTYLYNDGEFWHFMNNETFEQLSADAKAIGDNAKWLLDQAECIVTLWNGQPISVTPPNFVELEIVDTDPGLKGDTAGTGGKPATLSTGAVVKVPLFVQIGEVIKVDTRSGEYVSRVK.

Position 34 is an N6-(3,6-diaminohexanoyl)-5-hydroxylysine (K34).

The protein belongs to the elongation factor P family. In terms of processing, is beta-lysylated on the epsilon-amino group of Lys-34 by the combined action of EpmA and EpmB, and then hydroxylated on the C5 position of the same residue by EpmC. Lysylation is critical for the stimulatory effect of EF-P on peptide-bond formation. The lysylation moiety would extend toward the peptidyltransferase center and stabilize the terminal 3-CCA end of the tRNA. The hydroxylation of the C5 position on Lys-34 would allow additional potential stabilizing hydrogen-bond interactions with the P-tRNA.

Its subcellular location is the cytoplasm. Its pathway is protein biosynthesis; polypeptide chain elongation. Involved in peptide bond synthesis. Alleviates ribosome stalling that occurs when 3 or more consecutive Pro residues or the sequence PPG is present in a protein, possibly by augmenting the peptidyl transferase activity of the ribosome. Modification of Lys-34 is required for alleviation. The sequence is that of Elongation factor P from Salmonella arizonae (strain ATCC BAA-731 / CDC346-86 / RSK2980).